Reading from the N-terminus, the 183-residue chain is Large ribosomal subunit protein uL5 (183 aa).

The protein belongs to the universal ribosomal protein uL5 family. As to quaternary structure, part of the 50S ribosomal subunit; contacts the 5S rRNA and probably tRNA. Forms a bridge to the 30S subunit in the 70S ribosome.

This is one of the proteins that bind and probably mediate the attachment of the 5S RNA into the large ribosomal subunit, where it forms part of the central protuberance. In the 70S ribosome it contacts protein S13 of the 30S subunit (bridge B1b), connecting the 2 subunits; this bridge is implicated in subunit movement. May contact the P site tRNA; the 5S rRNA and some of its associated proteins might help stabilize positioning of ribosome-bound tRNAs. The sequence is that of Large ribosomal subunit protein uL5 from Thermococcus kodakarensis (strain ATCC BAA-918 / JCM 12380 / KOD1) (Pyrococcus kodakaraensis (strain KOD1)).